We begin with the raw amino-acid sequence, 306 residues long: UDP-3-O-acyl-N-acetylglucosamine deacetylase (306 aa).

Positions 79, 238, and 242 each coordinate Zn(2+). The active-site Proton donor is the H265.

Belongs to the LpxC family. Requires Zn(2+) as cofactor.

The enzyme catalyses a UDP-3-O-[(3R)-3-hydroxyacyl]-N-acetyl-alpha-D-glucosamine + H2O = a UDP-3-O-[(3R)-3-hydroxyacyl]-alpha-D-glucosamine + acetate. It participates in glycolipid biosynthesis; lipid IV(A) biosynthesis; lipid IV(A) from (3R)-3-hydroxytetradecanoyl-[acyl-carrier-protein] and UDP-N-acetyl-alpha-D-glucosamine: step 2/6. Its function is as follows. Catalyzes the hydrolysis of UDP-3-O-myristoyl-N-acetylglucosamine to form UDP-3-O-myristoylglucosamine and acetate, the committed step in lipid A biosynthesis. The chain is UDP-3-O-acyl-N-acetylglucosamine deacetylase from Shewanella loihica (strain ATCC BAA-1088 / PV-4).